Here is a 223-residue protein sequence, read N- to C-terminus: Leucyl/phenylalanyl-tRNA--protein transferase (223 aa).

This sequence belongs to the L/F-transferase family.

The protein resides in the cytoplasm. The enzyme catalyses N-terminal L-lysyl-[protein] + L-leucyl-tRNA(Leu) = N-terminal L-leucyl-L-lysyl-[protein] + tRNA(Leu) + H(+). It catalyses the reaction N-terminal L-arginyl-[protein] + L-leucyl-tRNA(Leu) = N-terminal L-leucyl-L-arginyl-[protein] + tRNA(Leu) + H(+). The catalysed reaction is L-phenylalanyl-tRNA(Phe) + an N-terminal L-alpha-aminoacyl-[protein] = an N-terminal L-phenylalanyl-L-alpha-aminoacyl-[protein] + tRNA(Phe). Functions in the N-end rule pathway of protein degradation where it conjugates Leu, Phe and, less efficiently, Met from aminoacyl-tRNAs to the N-termini of proteins containing an N-terminal arginine or lysine. The protein is Leucyl/phenylalanyl-tRNA--protein transferase of Dinoroseobacter shibae (strain DSM 16493 / NCIMB 14021 / DFL 12).